We begin with the raw amino-acid sequence, 346 residues long: Putative [LysW]-L-2-aminoadipate/[LysW]-L-glutamate phosphate reductase (346 aa).

12-15 (SGFT) serves as a coordination point for NADP(+). Cys147 is an active-site residue. Positions 178-198 (GSSEGGAGGGDASSHPERSGV) are disordered. Asn310 lines the NADP(+) pocket.

The protein belongs to the NAGSA dehydrogenase family. Type 1 subfamily. LysY sub-subfamily.

The protein resides in the cytoplasm. The enzyme catalyses [amino-group carrier protein]-C-terminal-N-(1-carboxy-5-oxopentan-1-yl)-L-glutamine + phosphate + NADP(+) = [amino-group carrier protein]-C-terminal-N-(1-carboxy-5-phosphooxy-5-oxopentan-1-yl)-L-glutamine + NADPH + H(+). It catalyses the reaction [amino-group carrier protein]-C-terminal-gamma-(L-glutamyl-5-semialdehyde)-L-glutamate + phosphate + NADP(+) = [amino-group carrier protein]-C-terminal-gamma-(5-phospho-L-glutamyl)-L-glutamate + NADPH + H(+). Its pathway is amino-acid biosynthesis; L-lysine biosynthesis via AAA pathway; L-lysine from L-alpha-aminoadipate (Thermus route): step 3/5. The protein operates within amino-acid biosynthesis; L-arginine biosynthesis. Its function is as follows. Involved in both the arginine and lysine biosynthetic pathways. This is Putative [LysW]-L-2-aminoadipate/[LysW]-L-glutamate phosphate reductase from Haloquadratum walsbyi (strain DSM 16790 / HBSQ001).